A 519-amino-acid chain; its full sequence is AarF domain-containing protein kinase 1 (519 aa).

The Protein kinase domain occupies 145–481 (SFEDTPLGAA…SLYRRVHISL (337 aa)). Residues 151 to 159 (LGAASLAQV) and lysine 173 each bind ATP. The Proton acceptor role is filled by aspartate 305.

The protein belongs to the protein kinase superfamily. ADCK protein kinase family.

It localises to the mitochondrion. Functionally, appears to be essential for maintaining mitochondrial cristae formation and mitochondrial function by acting via YME1L1 in a kinase-independent manner to regulate essential mitochondrial structural proteins OPA1 and IMMT. The action of this enzyme is not yet clear. It is not known if it has protein kinase activity and what type of substrate it would phosphorylate (Ser, Thr or Tyr). In Gallus gallus (Chicken), this protein is AarF domain-containing protein kinase 1 (ADCK1).